We begin with the raw amino-acid sequence, 198 residues long: V-type ATP synthase subunit E (198 aa).

It belongs to the V-ATPase E subunit family.

Functionally, produces ATP from ADP in the presence of a proton gradient across the membrane. The polypeptide is V-type ATP synthase subunit E (Clostridium novyi (strain NT)).